A 607-amino-acid polypeptide reads, in one-letter code: Siderochrome iron transporter 2 (607 aa).

Residues 1 to 46 (MGLFGSFGARNKATPQVPPGAVAKAPEGTPKGPETNDQPDMDSSRL) are disordered. 13 helical membrane-spanning segments follow: residues 86–106 (VWAT…QSGI), 129–149 (ILSS…LNLW), 152–172 (AEGF…LAAC), 180–200 (AGYV…DVFV), 210–230 (AFTF…APLA), 242–262 (WAYG…AVVF), 297–317 (IIGA…FSLA), 326–346 (SAAF…FAAW), 367–387 (LGAC…DLYF), 404–424 (YMTQ…GLWV), 432–452 (HTCL…MIHF), 459–479 (IGYV…LVIG), and 499–519 (FIGL…AAIY). An N-linked (GlcNAc...) asparagine glycan is attached at Asn538. The helical transmembrane segment at 573 to 593 (FGAVAATCILILGIPAIAVWK) threads the bilayer.

It belongs to the major facilitator superfamily.

The protein localises to the cell membrane. Its function is as follows. Major facilitator transporter involved in ferrichrome (FC) uptake. The polypeptide is Siderochrome iron transporter 2 (Aspergillus fumigatus (strain ATCC MYA-4609 / CBS 101355 / FGSC A1100 / Af293) (Neosartorya fumigata)).